Reading from the N-terminus, the 153-residue chain is Ribosomal RNA large subunit methyltransferase H (153 aa).

Residues Ile-75, Gly-103, and 121 to 126 each bind S-adenosyl-L-methionine; that span reads LSAMTF.

The protein belongs to the RNA methyltransferase RlmH family. As to quaternary structure, homodimer.

It is found in the cytoplasm. It carries out the reaction pseudouridine(1915) in 23S rRNA + S-adenosyl-L-methionine = N(3)-methylpseudouridine(1915) in 23S rRNA + S-adenosyl-L-homocysteine + H(+). Its function is as follows. Specifically methylates the pseudouridine at position 1915 (m3Psi1915) in 23S rRNA. This Helicobacter hepaticus (strain ATCC 51449 / 3B1) protein is Ribosomal RNA large subunit methyltransferase H.